The primary structure comprises 300 residues: Ribosomal RNA small subunit methyltransferase H (300 aa).

Residues 35–37 (GGH), aspartate 55, phenylalanine 82, aspartate 100, and glutamine 107 each bind S-adenosyl-L-methionine.

This sequence belongs to the methyltransferase superfamily. RsmH family.

Its subcellular location is the cytoplasm. It catalyses the reaction cytidine(1402) in 16S rRNA + S-adenosyl-L-methionine = N(4)-methylcytidine(1402) in 16S rRNA + S-adenosyl-L-homocysteine + H(+). Specifically methylates the N4 position of cytidine in position 1402 (C1402) of 16S rRNA. In Chlamydia trachomatis serovar A (strain ATCC VR-571B / DSM 19440 / HAR-13), this protein is Ribosomal RNA small subunit methyltransferase H.